Reading from the N-terminus, the 561-residue chain is Long-chain-fatty-acid--CoA ligase (561 aa).

213–224 serves as a coordination point for ATP; sequence YTGGTTGVAKGA.

Belongs to the ATP-dependent AMP-binding enzyme family. Mg(2+) serves as cofactor.

It is found in the membrane. The enzyme catalyses a long-chain fatty acid + ATP + CoA = a long-chain fatty acyl-CoA + AMP + diphosphate. It participates in lipid metabolism; fatty acid beta-oxidation. Catalyzes the esterification, concomitant with transport, of exogenous long-chain fatty acids into metabolically active CoA thioesters for subsequent degradation or incorporation into phospholipids. In Salmonella typhi, this protein is Long-chain-fatty-acid--CoA ligase (fadD).